The primary structure comprises 349 residues: Achromobactin transport system permease protein CbrC (349 aa).

Transmembrane regions (helical) follow at residues Leu32–Leu52, Val82–Ile102, Ile111–Ala131, Leu138–Trp158, Val168–Phe188, Pro190–Trp210, Leu216–Val236, Val263–Ala283, Leu290–Val310, and Asp325–Ile345.

Belongs to the binding-protein-dependent transport system permease family. FecCD subfamily.

Its subcellular location is the cell inner membrane. Part of the binding-protein-dependent transport system CbrABCD for uptake of the siderophore achromobactin. Probably responsible for the translocation of the substrate across the membrane. This is Achromobactin transport system permease protein CbrC (cbrC) from Dickeya dadantii (strain 3937) (Erwinia chrysanthemi (strain 3937)).